Reading from the N-terminus, the 471-residue chain is ATP synthase subunit beta (471 aa).

159–166 (GGAGVGKT) lines the ATP pocket.

This sequence belongs to the ATPase alpha/beta chains family. In terms of assembly, F-type ATPases have 2 components, CF(1) - the catalytic core - and CF(0) - the membrane proton channel. CF(1) has five subunits: alpha(3), beta(3), gamma(1), delta(1), epsilon(1). CF(0) has four main subunits: a(1), b(1), b'(1) and c(9-12).

It is found in the cell membrane. The catalysed reaction is ATP + H2O + 4 H(+)(in) = ADP + phosphate + 5 H(+)(out). In terms of biological role, produces ATP from ADP in the presence of a proton gradient across the membrane. The catalytic sites are hosted primarily by the beta subunits. This chain is ATP synthase subunit beta, found in Heliobacterium modesticaldum (strain ATCC 51547 / Ice1).